A 427-amino-acid chain; its full sequence is MHAWPAPEVPELPGHGSAVRLHDTAAQGLVPTPAAAPGEAARIYVCGITPYDATHMGHANTYLTFDLIQRAWLDAGHPVSYVQNVTDVDDPLLERAAATGRDWEALAESETALFREDMTALRILPPQHYVGAVESIPLVVDLVVKLLERGAAYDVDGDVYFSVHADPAFGAVAHLDAPEMLTTFGERGGDPGRPGKKDPLDCLLWQAEREGEPSWEPGEQARAAGLKPGRPGWHIECAAIALEHLGMGIDLQGGGSDLAFPHHEMGASEAQVVTGQRPYAHSYVHSGMVGLDGEKMSKSKGNLVLVSKLRHAGVDPMAIRLALLAHHYRTDWEWTDADLVSAVARLARWRAAVSRPDGVPADDVLDAVRARIADDLDAPGALAVIDAWVARQEAADGDDTAAASAQRNTAAPGQISRITDALLGVAL.

Cysteine 46 lines the Zn(2+) pocket. L-cysteinyl-5'-AMP contacts are provided by residues 46–49 (CGIT), threonine 61, and 84–86 (NVT). Residues 48 to 58 (ITPYDATHMGH) carry the 'HIGH' region motif. Residues 186–191 (ERGGDP) carry the 'ERGGDP' region motif. Tryptophan 233 lines the L-cysteinyl-5'-AMP pocket. Cysteine 237 is a Zn(2+) binding site. An L-cysteinyl-5'-AMP-binding site is contributed by 255–257 (GSD). Histidine 262 contacts Zn(2+). Valine 289 is an L-cysteinyl-5'-AMP binding site. Residues 295–299 (KMSKS) carry the 'KMSKS' region motif.

Belongs to the class-I aminoacyl-tRNA synthetase family. MshC subfamily. As to quaternary structure, monomer. The cofactor is Zn(2+).

The enzyme catalyses 1D-myo-inositol 2-amino-2-deoxy-alpha-D-glucopyranoside + L-cysteine + ATP = 1D-myo-inositol 2-(L-cysteinylamino)-2-deoxy-alpha-D-glucopyranoside + AMP + diphosphate + H(+). Its function is as follows. Catalyzes the ATP-dependent condensation of GlcN-Ins and L-cysteine to form L-Cys-GlcN-Ins. The protein is L-cysteine:1D-myo-inositol 2-amino-2-deoxy-alpha-D-glucopyranoside ligase of Catenulispora acidiphila (strain DSM 44928 / JCM 14897 / NBRC 102108 / NRRL B-24433 / ID139908).